A 179-amino-acid chain; its full sequence is MAELATIARPYAEALFGVAEAGDIAAWSTLVQELAQVARLPDVLSIASSPKVSRAQISDLLLAAVKSPLKDNAQAKNLVQMLVDNHRLPLLPEIATQFEELKNAREGAADALIVSAFPLEGAQLDGLVASLERKFKRKLKPTVQVDSSLIGGVRVTVGDEVLDTSVRARLASMQTALTA.

The protein belongs to the ATPase delta chain family. F-type ATPases have 2 components, F(1) - the catalytic core - and F(0) - the membrane proton channel. F(1) has five subunits: alpha(3), beta(3), gamma(1), delta(1), epsilon(1). F(0) has three main subunits: a(1), b(2) and c(10-14). The alpha and beta chains form an alternating ring which encloses part of the gamma chain. F(1) is attached to F(0) by a central stalk formed by the gamma and epsilon chains, while a peripheral stalk is formed by the delta and b chains.

Its subcellular location is the cell inner membrane. In terms of biological role, f(1)F(0) ATP synthase produces ATP from ADP in the presence of a proton or sodium gradient. F-type ATPases consist of two structural domains, F(1) containing the extramembraneous catalytic core and F(0) containing the membrane proton channel, linked together by a central stalk and a peripheral stalk. During catalysis, ATP synthesis in the catalytic domain of F(1) is coupled via a rotary mechanism of the central stalk subunits to proton translocation. Functionally, this protein is part of the stalk that links CF(0) to CF(1). It either transmits conformational changes from CF(0) to CF(1) or is implicated in proton conduction. The sequence is that of ATP synthase subunit delta from Paraburkholderia phymatum (strain DSM 17167 / CIP 108236 / LMG 21445 / STM815) (Burkholderia phymatum).